Here is a 1218-residue protein sequence, read N- to C-terminus: Structural maintenance of chromosomes protein 2 (1218 aa).

Residue 32–39 (GLNGSGKS) coordinates ATP. Positions 209–517 (VKLKKEKEEY…INSVKIDYKI (309 aa)) form a coiled coil. One can recognise an SMC hinge domain in the interval 525–654 (DVLGQIYKLI…CSNVDLCKKI (130 aa)). Coiled-coil stretches lie at residues 693–949 (LNYE…DTVK) and 978–1045 (RHDV…KKSE).

This sequence belongs to the SMC family. SMC2 subfamily.

The protein resides in the nucleus. May play a role in the conversion of interphase chromatin into condensed chromosomes. This Plasmodium falciparum (isolate 3D7) protein is Structural maintenance of chromosomes protein 2.